A 1074-amino-acid polypeptide reads, in one-letter code: Collagen, type I, alpha 1a (1074 aa).

Positions 1–13 are enriched in pro residues; sequence KSPAMPVPGPMGP. A disordered region spans residues 1–1010; that stretch reads KSPAMPVPGP…PQEKAPDPYR (1010 aa). Positions 14 to 36 are enriched in low complexity; the sequence is MGPRSGPQGFPGEAGAAGAMGPR. The segment covering 45–59 has biased composition (basic and acidic residues); sequence NGEDGESGKPGRGGE. The segment covering 129-147 has biased composition (low complexity); sequence TGAAGAAGARGNDGAAGAA. Over residues 149-162 the composition is skewed to pro residues; that stretch reads PPGPTGPAGPPGFP. The span at 163-181 shows a compositional bias: gly residues; sequence GGPGAKGDAGAQGGRGPEG. Composition is skewed to low complexity over residues 182–225, 234–272, and 290–299; these read PAGA…AGAP, SGPQ…APGV, and EPGAAGARGA. The segment covering 301-313 has biased composition (gly residues); that stretch reads GERGGPGGRGFPG. 3 stretches are compositionally biased toward low complexity: residues 377-392, 469-530, and 563-578; these read VGAR…PGPK, VPGE…QGMP, and RGLT…AGAT. The segment covering 588–597 has biased composition (gly residues); sequence GPVGPGGARG. 2 stretches are compositionally biased toward low complexity: residues 611–647 and 661–683; these read AGFA…AGPT and PKGA…AGRV. Pro residues predominate over residues 685–697; sequence PPGPSGNPGPPGP. Low complexity-rich tracts occupy residues 715-742 and 803-823; these read PAGR…SEGA and PGLA…SEGS. Over residues 847-857 the composition is skewed to pro residues; it reads APGPPGAPGPV. Positions 871 to 890 are enriched in low complexity; it reads PAGPAGSAGPAGPRGPAGAP. A compositionally biased stretch (basic and acidic residues) spans 893 to 907; the sequence is RGDKGESGEAGERGH. Over residues 920-956 the composition is skewed to low complexity; that stretch reads SGSSGEQGPAGAAGPAGPRGPAGSAGSPGKDGMSGLP. Positions 974–986 are enriched in pro residues; that stretch reads AGPPGPPGPPGAP. The 61-residue stretch at 1014 to 1074 folds into the Fibrillar collagen NC1 domain; it reads LEVDSTLKSL…GLEVGPVCFL (61 aa).

The protein belongs to the fibrillar collagen family.

Its subcellular location is the secreted. It localises to the extracellular space. It is found in the extracellular matrix. In Epinephelus marginatus (Dusky grouper), this protein is Collagen, type I, alpha 1a.